A 511-amino-acid chain; its full sequence is Arabinose import ATP-binding protein AraG (511 aa).

ABC transporter domains lie at 5-240 (LEFR…MVGR) and 240-501 (RQID…LRPR). Residue 37–44 (GENGAGKS) coordinates ATP.

It belongs to the ABC transporter superfamily. Arabinose importer (TC 3.A.1.2.2) family. In terms of assembly, the complex is composed of two ATP-binding proteins (AraG), two transmembrane proteins (AraH) and a solute-binding protein (AraF).

Its subcellular location is the cell inner membrane. It catalyses the reaction L-arabinose(out) + ATP + H2O = L-arabinose(in) + ADP + phosphate + H(+). Its function is as follows. Part of the ABC transporter complex AraFGH involved in arabinose import. Responsible for energy coupling to the transport system. In Ralstonia nicotianae (strain ATCC BAA-1114 / GMI1000) (Ralstonia solanacearum), this protein is Arabinose import ATP-binding protein AraG.